A 102-amino-acid chain; its full sequence is Large ribosomal subunit protein bL21 (102 aa).

This sequence belongs to the bacterial ribosomal protein bL21 family. Part of the 50S ribosomal subunit. Contacts protein L20.

Its function is as follows. This protein binds to 23S rRNA in the presence of protein L20. The polypeptide is Large ribosomal subunit protein bL21 (Nocardioides sp. (strain ATCC BAA-499 / JS614)).